Here is a 255-residue protein sequence, read N- to C-terminus: 5-oxoprolinase subunit A (255 aa).

Belongs to the LamB/PxpA family. As to quaternary structure, forms a complex composed of PxpA, PxpB and PxpC.

It carries out the reaction 5-oxo-L-proline + ATP + 2 H2O = L-glutamate + ADP + phosphate + H(+). Catalyzes the cleavage of 5-oxoproline to form L-glutamate coupled to the hydrolysis of ATP to ADP and inorganic phosphate. The sequence is that of 5-oxoprolinase subunit A from Corynebacterium efficiens (strain DSM 44549 / YS-314 / AJ 12310 / JCM 11189 / NBRC 100395).